We begin with the raw amino-acid sequence, 138 residues long: CLAVATA3/ESR (CLE)-related protein 2 (138 aa).

Positions 1–22 (MPNIFKILLIVLLAVVSFRLSA) are cleaved as a signal peptide. A required for secretion from the host cytoplasm to the host apoplasm region spans residues 23–90 (STGDKKTAND…VPSHVTNRSM (68 aa)). N-linked (GlcNAc...) asparagine glycosylation is found at asparagine 37, asparagine 87, and asparagine 123. 2 disordered regions span residues 66–97 (AIGR…PPPV) and 116–138 (LAEK…PHHH). The CLE motif lies at 127-138 (RLSPSGPDPHHH).

Belongs to the CLV3/ESR signal peptide family. As to expression, highly expressed exclusively within the dorsal esophageal gland cell during syncytium formation in host plants (at protein level).

The protein localises to the secreted. The protein resides in the host cytoplasm. Its subcellular location is the host extracellular space. It localises to the extracellular space. It is found in the apoplast. In terms of biological role, mimics host plant CLE extracellular signal peptides that regulate cell fate. May play a role in the differentiation or division of feeding cells (syncytia) induced in plant roots during infection. The polypeptide is CLAVATA3/ESR (CLE)-related protein 2 (CLE2) (Heterodera glycines (Soybean cyst nematode worm)).